The sequence spans 211 residues: Somatotropin (211 aa).

The signal sequence occupies residues 1 to 23 (MASGFLLCPVLLAVFFMSPVEVG). Zn(2+) is bound at residue His-40. A disulfide bridge connects residues Cys-73 and Cys-184. Glu-193 is a Zn(2+) binding site. Cysteines 201 and 209 form a disulfide.

The protein belongs to the somatotropin/prolactin family.

The protein localises to the secreted. Functionally, growth hormone plays an important role in growth control and is involved in the regulation of several anabolic processes. Implicated as an osmoregulatory substance important for seawater adaptation. The chain is Somatotropin (gh) from Lepisosteus osseus (Long-nosed gar).